Reading from the N-terminus, the 159-residue chain is 2-C-methyl-D-erythritol 2,4-cyclodiphosphate synthase (159 aa).

A divalent metal cation-binding residues include Asp-10 and His-12. 4-CDP-2-C-methyl-D-erythritol 2-phosphate is bound by residues 10–12 and 36–37; these read DVH and HS. His-44 lines the a divalent metal cation pocket. 4-CDP-2-C-methyl-D-erythritol 2-phosphate-binding positions include 58 to 60, 63 to 67, 102 to 108, 134 to 137, Phe-141, 141 to 144, and Arg-144; these read DIG, FPDTD, AQAPKMA, TTTE, and FTGR.

It belongs to the IspF family. As to quaternary structure, homotrimer. It depends on a divalent metal cation as a cofactor.

The catalysed reaction is 4-CDP-2-C-methyl-D-erythritol 2-phosphate = 2-C-methyl-D-erythritol 2,4-cyclic diphosphate + CMP. Its pathway is isoprenoid biosynthesis; isopentenyl diphosphate biosynthesis via DXP pathway; isopentenyl diphosphate from 1-deoxy-D-xylulose 5-phosphate: step 4/6. Its function is as follows. Involved in the biosynthesis of isopentenyl diphosphate (IPP) and dimethylallyl diphosphate (DMAPP), two major building blocks of isoprenoid compounds. Catalyzes the conversion of 4-diphosphocytidyl-2-C-methyl-D-erythritol 2-phosphate (CDP-ME2P) to 2-C-methyl-D-erythritol 2,4-cyclodiphosphate (ME-CPP) with a corresponding release of cytidine 5-monophosphate (CMP). This chain is 2-C-methyl-D-erythritol 2,4-cyclodiphosphate synthase, found in Shewanella oneidensis (strain ATCC 700550 / JCM 31522 / CIP 106686 / LMG 19005 / NCIMB 14063 / MR-1).